A 521-amino-acid polypeptide reads, in one-letter code: 2-isopropylmalate synthase (521 aa).

The Pyruvate carboxyltransferase domain occupies 12–274 (VIIFDTTLRD…WNKIDTTMLT (263 aa)). 4 residues coordinate Mn(2+): D21, H209, H211, and N245. The regulatory domain stretch occupies residues 398–521 (KLVSLTVIAG…DMAAPAAAAS (124 aa)).

This sequence belongs to the alpha-IPM synthase/homocitrate synthase family. LeuA type 1 subfamily. Homodimer. The cofactor is Mn(2+).

The protein resides in the cytoplasm. It catalyses the reaction 3-methyl-2-oxobutanoate + acetyl-CoA + H2O = (2S)-2-isopropylmalate + CoA + H(+). It functions in the pathway amino-acid biosynthesis; L-leucine biosynthesis; L-leucine from 3-methyl-2-oxobutanoate: step 1/4. Its function is as follows. Catalyzes the condensation of the acetyl group of acetyl-CoA with 3-methyl-2-oxobutanoate (2-ketoisovalerate) to form 3-carboxy-3-hydroxy-4-methylpentanoate (2-isopropylmalate). This is 2-isopropylmalate synthase from Rhodopseudomonas palustris (strain BisA53).